The sequence spans 161 residues: Peripheral myelin protein 22 (161 aa).

A topological domain (cytoplasmic) is located at residue Met-1. Residues 2-31 form a helical membrane-spanning segment; sequence LLLLLGILFLHIAVLVLLFVSTIVSQWLVG. The Extracellular portion of the chain corresponds to 32-64; that stretch reads NGHTTDLWQNCTTSALGAVQHCYSSSVSEWLQS. Asn-41 carries an N-linked (GlcNAc...) asparagine glycan. Residues 65–91 form a helical membrane-spanning segment; the sequence is VQATMILSVIFSVLALFLFFCQLFTLT. Topologically, residues 92–95 are cytoplasmic; that stretch reads KGGR. Residues 96–119 form a helical membrane-spanning segment; sequence FYITGFFQILAGLCVMSAAAIYTV. Over 120–133 the chain is Extracellular; that stretch reads RHSEWHVNTDYSYG. A helical membrane pass occupies residues 134–156; sequence FAYILAWVAFPLALLSGIIYVIL. Residues 157–160 are Cytoplasmic-facing; it reads RKRE.

The protein belongs to the PMP-22/EMP/MP20 family. Post-translationally, ubiquitinated by the DCX(DCAF13) E3 ubiquitin ligase complex, leading to its degradation. Schwann cells of the peripheral nervous system. Expressed at growth arrest of mammalian fibroblasts.

It localises to the cell membrane. Might be involved in growth regulation, and in myelinization in the peripheral nervous system. In Mus musculus (Mouse), this protein is Peripheral myelin protein 22 (Pmp22).